The chain runs to 572 residues: Moesin/ezrin/radixin homolog 1 (572 aa).

Positions 1 to 291 constitute an FERM domain; that stretch reads MNVRVTTMDA…GNHELYMRRR (291 aa). Residues 456–491 form a disordered region; that stretch reads TTTPSHHHVEEEEEMDNEEELVNGENGNQDFSKDFD. Acidic residues predominate over residues 466–477; sequence EEEEMDNEEELV. The residue at position 553 (Thr-553) is a Phosphothreonine.

Interacts with cytoskeletal actin.

The protein resides in the cell junction. It localises to the adherens junction. The protein localises to the cell projection. Its subcellular location is the microvillus. It is found in the rhabdomere. The protein resides in the cell membrane. It localises to the cytoplasm. The protein localises to the cytoskeleton. Functionally, involved in connections of major cytoskeletal structures to the plasma membrane. This chain is Moesin/ezrin/radixin homolog 1, found in Culex quinquefasciatus (Southern house mosquito).